The primary structure comprises 189 residues: Large ribosomal subunit protein bL9 (189 aa).

The protein belongs to the bacterial ribosomal protein bL9 family.

Binds to the 23S rRNA. This chain is Large ribosomal subunit protein bL9, found in Methylobacterium nodulans (strain LMG 21967 / CNCM I-2342 / ORS 2060).